Here is a 63-residue protein sequence, read N- to C-terminus: Large ribosomal subunit protein bL28 (63 aa).

It belongs to the bacterial ribosomal protein bL28 family.

This chain is Large ribosomal subunit protein bL28, found in Solibacter usitatus (strain Ellin6076).